The primary structure comprises 130 residues: Secreted RxLR effector protein 68 (130 aa).

Positions methionine 1–cysteine 29 are cleaved as a signal peptide. N-linked (GlcNAc...) asparagine glycosylation is present at asparagine 36. Residues arginine 45–arginine 48 carry the RxLR motif.

This sequence belongs to the RxLR effector family.

The protein localises to the secreted. It localises to the host cytoplasm. It is found in the host nucleus. Its function is as follows. Effector that acts as a broad suppressor of cell death to interrupt plant immunity. Inhibits cell death induced by cell death-inducing proteins, including the PAMP elicitor INF1 from P.infestans. The polypeptide is Secreted RxLR effector protein 68 (Plasmopara viticola (Downy mildew of grapevine)).